A 248-amino-acid polypeptide reads, in one-letter code: Enolase-phosphatase E1 (248 aa).

Mg(2+) contacts are provided by Asp14 and Glu16. Substrate contacts are provided by residues 145–146 and Lys179; that span reads SS. A Mg(2+)-binding site is contributed by Asp204.

Belongs to the HAD-like hydrolase superfamily. MasA/MtnC family. As to quaternary structure, monomer. Requires Mg(2+) as cofactor.

Its subcellular location is the cytoplasm. It is found in the nucleus. It catalyses the reaction 5-methylsulfanyl-2,3-dioxopentyl phosphate + H2O = 1,2-dihydroxy-5-(methylsulfanyl)pent-1-en-3-one + phosphate. It participates in amino-acid biosynthesis; L-methionine biosynthesis via salvage pathway; L-methionine from S-methyl-5-thio-alpha-D-ribose 1-phosphate: step 3/6. The protein operates within amino-acid biosynthesis; L-methionine biosynthesis via salvage pathway; L-methionine from S-methyl-5-thio-alpha-D-ribose 1-phosphate: step 4/6. In terms of biological role, bifunctional enzyme that catalyzes the enolization of 2,3-diketo-5-methylthiopentyl-1-phosphate (DK-MTP-1-P) into the intermediate 2-hydroxy-3-keto-5-methylthiopentenyl-1-phosphate (HK-MTPenyl-1-P), which is then dephosphorylated to form the acireductone 1,2-dihydroxy-3-keto-5-methylthiopentene (DHK-MTPene). This is Enolase-phosphatase E1 from Caenorhabditis elegans.